Reading from the N-terminus, the 92-residue chain is Acylphosphatase (92 aa).

The 88-residue stretch at 5 to 92 (GVTIYVYGRV…EDIADFIVRH (88 aa)) folds into the Acylphosphatase-like domain. Catalysis depends on residues arginine 20 and asparagine 38.

It belongs to the acylphosphatase family.

The catalysed reaction is an acyl phosphate + H2O = a carboxylate + phosphate + H(+). The polypeptide is Acylphosphatase (acyP) (Photorhabdus laumondii subsp. laumondii (strain DSM 15139 / CIP 105565 / TT01) (Photorhabdus luminescens subsp. laumondii)).